A 67-amino-acid polypeptide reads, in one-letter code: ATP synthase F(0) complex subunit 8 (67 aa).

A helical membrane pass occupies residues Thr8–Phe24. Residue Lys54 is modified to N6-acetyllysine; alternate. Residue Lys54 is modified to N6-succinyllysine; alternate. The residue at position 57 (Lys57) is an N6-acetyllysine.

The protein belongs to the ATPase protein 8 family. In terms of assembly, component of the ATP synthase complex composed at least of ATP5F1A/subunit alpha, ATP5F1B/subunit beta, ATP5MC1/subunit c (homooctomer), MT-ATP6/subunit a, MT-ATP8/subunit 8, ATP5ME/subunit e, ATP5MF/subunit f, ATP5MG/subunit g, ATP5MK/subunit k, ATP5MJ/subunit j, ATP5F1C/subunit gamma, ATP5F1D/subunit delta, ATP5F1E/subunit epsilon, ATP5PF/subunit F6, ATP5PB/subunit b, ATP5PD/subunit d, ATP5PO/subunit OSCP. ATP synthase complex consists of a soluble F(1) head domain (subunits alpha(3) and beta(3)) - the catalytic core - and a membrane F(0) domain - the membrane proton channel (subunits c, a, 8, e, f, g, k and j). These two domains are linked by a central stalk (subunits gamma, delta, and epsilon) rotating inside the F1 region and a stationary peripheral stalk (subunits F6, b, d, and OSCP). Interacts with PRICKLE3.

Its subcellular location is the mitochondrion membrane. Subunit 8, of the mitochondrial membrane ATP synthase complex (F(1)F(0) ATP synthase or Complex V) that produces ATP from ADP in the presence of a proton gradient across the membrane which is generated by electron transport complexes of the respiratory chain. ATP synthase complex consist of a soluble F(1) head domain - the catalytic core - and a membrane F(1) domain - the membrane proton channel. These two domains are linked by a central stalk rotating inside the F(1) region and a stationary peripheral stalk. During catalysis, ATP synthesis in the catalytic domain of F(1) is coupled via a rotary mechanism of the central stalk subunits to proton translocation. In vivo, can only synthesize ATP although its ATP hydrolase activity can be activated artificially in vitro. Part of the complex F(0) domain. In Phoca vitulina (Harbor seal), this protein is ATP synthase F(0) complex subunit 8.